Consider the following 171-residue polypeptide: Large ribosomal subunit protein uL10 (171 aa).

The protein belongs to the universal ribosomal protein uL10 family. As to quaternary structure, part of the ribosomal stalk of the 50S ribosomal subunit. The N-terminus interacts with L11 and the large rRNA to form the base of the stalk. The C-terminus forms an elongated spine to which L12 dimers bind in a sequential fashion forming a multimeric L10(L12)X complex.

Its function is as follows. Forms part of the ribosomal stalk, playing a central role in the interaction of the ribosome with GTP-bound translation factors. The polypeptide is Large ribosomal subunit protein uL10 (Maricaulis maris (strain MCS10) (Caulobacter maris)).